Consider the following 159-residue polypeptide: L-alanine exporter AlaE (159 aa).

4 consecutive transmembrane segments (helical) span residues phenylalanine 17–methionine 37, leucine 48–leucine 68, methionine 86–alanine 106, and glutamine 110–glycine 130.

This sequence belongs to the AlaE exporter family.

It localises to the cell inner membrane. Its function is as follows. Exports L-alanine. The chain is L-alanine exporter AlaE from Photobacterium profundum (strain SS9).